The sequence spans 238 residues: Ribonuclease PH (238 aa).

Residues R86 and 124–126 (GTR) each bind phosphate.

The protein belongs to the RNase PH family. As to quaternary structure, homohexameric ring arranged as a trimer of dimers.

It carries out the reaction tRNA(n+1) + phosphate = tRNA(n) + a ribonucleoside 5'-diphosphate. Its function is as follows. Phosphorolytic 3'-5' exoribonuclease that plays an important role in tRNA 3'-end maturation. Removes nucleotide residues following the 3'-CCA terminus of tRNAs; can also add nucleotides to the ends of RNA molecules by using nucleoside diphosphates as substrates, but this may not be physiologically important. Probably plays a role in initiation of 16S rRNA degradation (leading to ribosome degradation) during starvation. The protein is Ribonuclease PH of Salmonella choleraesuis (strain SC-B67).